Consider the following 397-residue polypeptide: uncharacterized protein (397 aa).

[4Fe-4S] cluster-binding residues include C47, C53, C56, and C131. Q235, F262, E282, and D328 together coordinate S-adenosyl-L-methionine. The Nucleophile role is filled by C354.

Belongs to the class I-like SAM-binding methyltransferase superfamily. RNA M5U methyltransferase family.

This is an uncharacterized protein from Zymomonas mobilis subsp. mobilis (strain ATCC 31821 / ZM4 / CP4).